We begin with the raw amino-acid sequence, 366 residues long: Cytochrome c peroxidase, mitochondrial (366 aa).

The N-terminal 46 residues, 1 to 46 (MASAARSASRAFLRSTPTTSSFRPAVRAARFALPAQGFRAAGRRGY), are a transit peptide targeting the mitochondrion. Residue H127 is the Proton acceptor of the active site. H250 lines the heme b pocket. The active-site Tryptophan radical intermediate is W266.

Belongs to the peroxidase family. Cytochrome c peroxidase subfamily. Forms a one-to-one complex with cytochrome c. Heme b serves as cofactor.

The protein resides in the mitochondrion matrix. It is found in the mitochondrion intermembrane space. The catalysed reaction is 2 Fe(II)-[cytochrome c] + H2O2 + 2 H(+) = 2 Fe(III)-[cytochrome c] + 2 H2O. Destroys radicals which are normally produced within the cells and which are toxic to biological systems. This is Cytochrome c peroxidase, mitochondrial (ccp1) from Aspergillus fumigatus (strain ATCC MYA-4609 / CBS 101355 / FGSC A1100 / Af293) (Neosartorya fumigata).